A 205-amino-acid polypeptide reads, in one-letter code: Protease (205 aa).

Catalysis depends on residues H54, D71, and C120.

It belongs to the peptidase C5 family. As to quaternary structure, interacts with protease cofactor pVI-C; this interaction is necessary for protease activation.

It is found in the virion. The protein localises to the host nucleus. It carries out the reaction Cleaves proteins of the adenovirus and its host cell at two consensus sites: -Yaa-Xaa-Gly-Gly-|-Xaa- and -Yaa-Xaa-Gly-Xaa-|-Gly- (in which Yaa is Met, Ile or Leu, and Xaa is any amino acid).. Requires DNA and protease cofactor for maximal activation. Inside nascent virions, becomes partially activated by binding to the viral DNA, allowing it to cleave the cofactor that binds to the protease and fully activates it. Actin, like the viral protease cofactor, seems to act as a cofactor in the cleavage of cytokeratin 18 and of actin itself. Its function is as follows. Cleaves viral precursor proteins (pTP, pIIIa, pVI, pVII, pVIII, and pX) inside newly assembled particles giving rise to mature virions. Protease complexed to its cofactor slides along the viral DNA to specifically locate and cleave the viral precursors. Mature virions have a weakened organization compared to the unmature virions, thereby facilitating subsequent uncoating. Without maturation, the particle lacks infectivity and is unable to uncoat. Late in adenovirus infection, in the cytoplasm, may participate in the cytoskeleton destruction. Cleaves host cell cytoskeletal keratins K7 and K18. This Bos taurus (Bovine) protein is Protease.